Here is a 45-residue protein sequence, read N- to C-terminus: Amphipathic peptide Hj0164 (45 aa).

The first 23 residues, 1-23, serve as a signal peptide directing secretion; that stretch reads MKSQAFFLLFLVVLLLATTQSEA. Phe-33 bears the Phenylalanine amide mark. Positions 37–45 are excised as a propeptide; the sequence is SLRDVDTMK.

Belongs to the non-disulfide-bridged peptide (NDBP) superfamily. Short antimicrobial peptide (group 4) family. As to expression, expressed by the venom gland.

It is found in the secreted. The protein resides in the target cell membrane. In terms of biological role, amphipathic peptide that shows antibacterial activities. The sequence is that of Amphipathic peptide Hj0164 from Hottentotta judaicus (Black scorpion).